The primary structure comprises 128 residues: Cytochrome c-type biogenesis protein CcmE (128 aa).

Over 1–8 the chain is Cytoplasmic; sequence MQKIVRNR. The chain crosses the membrane as a helical; Signal-anchor for type II membrane protein span at residues 9–29; that stretch reads LIKIILCFCSTCLGISIILYN. The Periplasmic segment spans residues 30 to 128; the sequence is LEKNIIFFFP…KHDENYRPPS (99 aa). The heme site is built by His120 and Tyr124.

It belongs to the CcmE/CycJ family.

It is found in the cell inner membrane. In terms of biological role, heme chaperone required for the biogenesis of c-type cytochromes. Transiently binds heme delivered by CcmC and transfers the heme to apo-cytochromes in a process facilitated by CcmF and CcmH. In Rickettsia typhi (strain ATCC VR-144 / Wilmington), this protein is Cytochrome c-type biogenesis protein CcmE.